Consider the following 59-residue polypeptide: Lantibiotic lacticin 3147 A1 (59 aa).

Residues 1 to 29 (MNKNEIETQPVTWLEEVSDQNFDEDVFGA) constitute a propeptide that is removed on maturation. A cross-link (lanthionine (Cys-Ser)) is located at residues 30–31 (CS). Residues Thr-32 and Thr-34 each carry the 2,3-didehydrobutyrine modification. Ser-36 carries the 2,3-didehydroalanine (Ser) modification. The segment at residues 38–48 (SDYWGNNGAWC) is a cross-link (lanthionine (Ser-Cys)). Cross-links (beta-methyllanthionine (Thr-Cys)) lie at residues 49–54 (TLTHEC) and 51–58 (THECMAWC).

In terms of processing, maturation of lantibiotics involves the enzymatic conversion of Thr, and Ser into dehydrated AA and the formation of thioether bonds with cysteine. This is followed by membrane translocation and cleavage of the modified precursor. Post-translationally, it is not established whether the 2,3-didehydrobutyrines are the E- or Z-isomers. In the NMR model they were assumed to be the Z-isomer.

It localises to the secreted. Lanthionine-containing peptide antibiotic (lantibiotic) active on Gram-positive bacteria. The bactericidal activity of lantibiotics is based on depolarization of energized bacterial cytoplasmic membranes, initiated by the formation of aqueous transmembrane pores. When present individually lacticin 3147 A1 exhibits strong activity towards L.lactis strain AM2, weak activity towards L.lactis strain HP and no activity towards L.lactis strain IFPL359, but when combined with lacticin 3147 A2 it displays strong activity towards all three strains. The polypeptide is Lantibiotic lacticin 3147 A1 (Lactococcus lactis subsp. lactis (Streptococcus lactis)).